A 351-amino-acid chain; its full sequence is Phosphoribosylformylglycinamidine cyclo-ligase (351 aa).

This sequence belongs to the AIR synthase family.

The protein localises to the cytoplasm. The enzyme catalyses 2-formamido-N(1)-(5-O-phospho-beta-D-ribosyl)acetamidine + ATP = 5-amino-1-(5-phospho-beta-D-ribosyl)imidazole + ADP + phosphate + H(+). It participates in purine metabolism; IMP biosynthesis via de novo pathway; 5-amino-1-(5-phospho-D-ribosyl)imidazole from N(2)-formyl-N(1)-(5-phospho-D-ribosyl)glycinamide: step 2/2. This Burkholderia cenocepacia (strain ATCC BAA-245 / DSM 16553 / LMG 16656 / NCTC 13227 / J2315 / CF5610) (Burkholderia cepacia (strain J2315)) protein is Phosphoribosylformylglycinamidine cyclo-ligase.